The chain runs to 234 residues: Core atranone cluster (CAC) protein 1 (234 aa).

It functions in the pathway mycotoxin biosynthesis. Part of the core atranone cluster (CAC) which products are predicted to catalyze most or all steps of mycotoxin atranone synthesis, starting from geranylgeranyl pyrophosphate (GGPP). The initial cyclization of GGPP to dolabellane is probably performed by the terpene cyclase ATR13. The Baeyer-Villiger oxidation near the end of the atranone synthesis, which converts atranones D and E to atranones F and G is predicted to be catalyzed by the monooxygenase ATR8. Of the CAC's other predicted gene products, the reducing PKS ATR6 might synthesize a polyketide chain. This polyketide is probably transferred onto the atranone backbone by the polyketide transferase ATR5. Other predicted CAC products include 4 oxygenases (ATR2, ATR3, ATR4, and ATR14), 3 short-chain reductases (ATR7, ATR9, and ATR10), and a methyltransferase (ATR12). These may all be involved in the various steps of atranone biosynthesis, although their specific roles must await experimental determination. The chain is Core atranone cluster (CAC) protein 1 from Stachybotrys chlorohalonatus (strain IBT 40285).